Here is a 400-residue protein sequence, read N- to C-terminus: Acetate kinase (400 aa).

Mg(2+) is bound at residue asparagine 7. Lysine 14 provides a ligand contact to ATP. Arginine 85 contacts substrate. Aspartate 142 functions as the Proton donor/acceptor in the catalytic mechanism. Residues 202–206, 278–280, and 326–330 each bind ATP; these read HLGNG, DMR, and GIGEN. Glutamate 380 contributes to the Mg(2+) binding site.

Belongs to the acetokinase family. Homodimer. Mg(2+) serves as cofactor. It depends on Mn(2+) as a cofactor.

The protein resides in the cytoplasm. The enzyme catalyses acetate + ATP = acetyl phosphate + ADP. Its pathway is metabolic intermediate biosynthesis; acetyl-CoA biosynthesis; acetyl-CoA from acetate: step 1/2. Functionally, catalyzes the formation of acetyl phosphate from acetate and ATP. Can also catalyze the reverse reaction. This chain is Acetate kinase, found in Deinococcus deserti (strain DSM 17065 / CIP 109153 / LMG 22923 / VCD115).